A 361-amino-acid chain; its full sequence is Polyribonucleotide 5'-hydroxyl-kinase PH0197 (361 aa).

43 to 50 (GDVDTGKT) lines the ATP pocket.

The cofactor is a divalent metal cation.

It carries out the reaction a 5'-end dephospho-2'-deoxyribonucleoside-DNA + ATP = a 5'-end 5'-phospho-2'-deoxyribonucleoside-DNA + ADP + H(+). The enzyme catalyses a 5'-end dephospho-ribonucleoside-RNA + ATP = a 5'-end 5'-phospho-ribonucleoside-RNA + ADP + H(+). DNA kinase activity is inhibited by 250 mM sodium chloride whereas RNA kinase activity is unaffected. In terms of biological role, polynucleotide kinase that can phosphorylate the 5'-hydroxyl groups of both single-stranded RNA (ssRNA) and single-stranded DNA (ssDNA). Exhibits a strong preference for ssRNA. The protein is Polyribonucleotide 5'-hydroxyl-kinase PH0197 of Pyrococcus horikoshii (strain ATCC 700860 / DSM 12428 / JCM 9974 / NBRC 100139 / OT-3).